The following is a 57-amino-acid chain: Exactin (57 aa).

4 disulfides stabilise this stretch: cysteine 3-cysteine 19, cysteine 12-cysteine 37, cysteine 41-cysteine 49, and cysteine 50-cysteine 55.

Belongs to the three-finger toxin family. Short-chain subfamily. Orphan group XX sub-subfamily. In terms of tissue distribution, expressed by the venom gland.

The protein localises to the secreted. Functionally, anticoagulant protein that prevents the activation of factor X (F10). It acts by potently inhibiting the extrinsic tenase complex (ETC) (IC(50)=116.49 nM), a complex composed by active factor VII (F7a), tissue factor (TF) and F10. In addition, it shows weaker activities on other complexes. It weakly inhibits F10 activation by inhibiting the intrinsic tenase complex (IC(50)=4.05 uM), a complex composed by active factor IX (IXa, F9a), its cofactor factor VIII (VIIIa, F8a), and their substrate F10. It also weakly prevents prothrombin activation by inhibiting the prothrombinase complex (IC(50)=17.66 uM). It shows high kinetic constant towards F7a/TF/F10/phospholipids complex (Ki=30.62 nM) and lower kinetic constant towards F7a/TF/phospholipids complex (Ki=153.75 nM). The chain is Exactin from Hemachatus haemachatus (Rinkhals).